The chain runs to 138 residues: Putative nickel-responsive regulator (138 aa).

The Ni(2+) site is built by H80, H91, H93, and C99.

This sequence belongs to the transcriptional regulatory CopG/NikR family. Requires Ni(2+) as cofactor.

Functionally, transcriptional regulator. This Campylobacter hominis (strain ATCC BAA-381 / DSM 21671 / CCUG 45161 / LMG 19568 / NCTC 13146 / CH001A) protein is Putative nickel-responsive regulator.